The primary structure comprises 293 residues: Ribosomal RNA small subunit methyltransferase A (293 aa).

N29, L31, G56, E77, D102, and N127 together coordinate S-adenosyl-L-methionine.

This sequence belongs to the class I-like SAM-binding methyltransferase superfamily. rRNA adenine N(6)-methyltransferase family. RsmA subfamily.

The protein resides in the cytoplasm. It carries out the reaction adenosine(1518)/adenosine(1519) in 16S rRNA + 4 S-adenosyl-L-methionine = N(6)-dimethyladenosine(1518)/N(6)-dimethyladenosine(1519) in 16S rRNA + 4 S-adenosyl-L-homocysteine + 4 H(+). In terms of biological role, specifically dimethylates two adjacent adenosines (A1518 and A1519) in the loop of a conserved hairpin near the 3'-end of 16S rRNA in the 30S particle. May play a critical role in biogenesis of 30S subunits. The protein is Ribosomal RNA small subunit methyltransferase A of Geobacillus thermodenitrificans (strain NG80-2).